A 480-amino-acid polypeptide reads, in one-letter code: tRNA modification GTPase MnmE (480 aa).

(6S)-5-formyl-5,6,7,8-tetrahydrofolate contacts are provided by Arg-20, Glu-114, and Lys-154. A TrmE-type G domain is found at 250–406 (GLKLAIIGPP…ILKNIENIAE (157 aa)). A K(+)-binding site is contributed by Asn-260. GTP is bound by residues 260-265 (NVGKSS), 279-285 (SNIAGTT), and 304-307 (DTAG). Residue Ser-264 coordinates Mg(2+). Residues Ser-279, Ile-281, and Thr-284 each coordinate K(+). Residue Thr-285 participates in Mg(2+) binding. Residue Lys-480 participates in (6S)-5-formyl-5,6,7,8-tetrahydrofolate binding.

This sequence belongs to the TRAFAC class TrmE-Era-EngA-EngB-Septin-like GTPase superfamily. TrmE GTPase family. In terms of assembly, homodimer. Heterotetramer of two MnmE and two MnmG subunits. K(+) is required as a cofactor.

The protein resides in the cytoplasm. Functionally, exhibits a very high intrinsic GTPase hydrolysis rate. Involved in the addition of a carboxymethylaminomethyl (cmnm) group at the wobble position (U34) of certain tRNAs, forming tRNA-cmnm(5)s(2)U34. This chain is tRNA modification GTPase MnmE, found in Rickettsia felis (strain ATCC VR-1525 / URRWXCal2) (Rickettsia azadi).